The sequence spans 511 residues: Cobyric acid synthase (511 aa).

The GATase cobBQ-type domain occupies 251-443 (LLDIAIICLP…IHGIFDNDVF (193 aa)). Cys332 serves as the catalytic Nucleophile. His435 is an active-site residue.

The protein belongs to the CobB/CobQ family. CobQ subfamily.

It functions in the pathway cofactor biosynthesis; adenosylcobalamin biosynthesis. Functionally, catalyzes amidations at positions B, D, E, and G on adenosylcobyrinic A,C-diamide. NH(2) groups are provided by glutamine, and one molecule of ATP is hydrogenolyzed for each amidation. The chain is Cobyric acid synthase from Listeria monocytogenes serotype 4a (strain HCC23).